Reading from the N-terminus, the 340-residue chain is Ketol-acid reductoisomerase (NADP(+)) (340 aa).

The KARI N-terminal Rossmann domain maps to 2–181 (VKMYYEADVK…GCTKAGVIET (180 aa)). NADP(+) contacts are provided by residues 25 to 28 (YGSQ), arginine 48, serine 52, and 82 to 85 (DERQ). The active site involves histidine 107. Glycine 133 provides a ligand contact to NADP(+). Residues 182-327 (SFREETETDL…EQLRGMMSWI (146 aa)) form the KARI C-terminal knotted domain. Residues aspartate 190, glutamate 194, glutamate 226, and glutamate 230 each contribute to the Mg(2+) site. Serine 251 contacts substrate.

This sequence belongs to the ketol-acid reductoisomerase family. The cofactor is Mg(2+).

It catalyses the reaction (2R)-2,3-dihydroxy-3-methylbutanoate + NADP(+) = (2S)-2-acetolactate + NADPH + H(+). The catalysed reaction is (2R,3R)-2,3-dihydroxy-3-methylpentanoate + NADP(+) = (S)-2-ethyl-2-hydroxy-3-oxobutanoate + NADPH + H(+). It participates in amino-acid biosynthesis; L-isoleucine biosynthesis; L-isoleucine from 2-oxobutanoate: step 2/4. The protein operates within amino-acid biosynthesis; L-valine biosynthesis; L-valine from pyruvate: step 2/4. Its function is as follows. Involved in the biosynthesis of branched-chain amino acids (BCAA). Catalyzes an alkyl-migration followed by a ketol-acid reduction of (S)-2-acetolactate (S2AL) to yield (R)-2,3-dihydroxy-isovalerate. In the isomerase reaction, S2AL is rearranged via a Mg-dependent methyl migration to produce 3-hydroxy-3-methyl-2-ketobutyrate (HMKB). In the reductase reaction, this 2-ketoacid undergoes a metal-dependent reduction by NADPH to yield (R)-2,3-dihydroxy-isovalerate. This is Ketol-acid reductoisomerase (NADP(+)) from Brevibacillus brevis (strain 47 / JCM 6285 / NBRC 100599).